Reading from the N-terminus, the 438-residue chain is ATP-dependent RNA helicase RhlB (438 aa).

A Q motif motif is present at residues 9-37 (QRFADLPLHPEVKQALAENGFEFCTPIQA). A Helicase ATP-binding domain is found at 40 to 219 (LPVLLQSKDI…YDHMNEPVKV (180 aa)). 53–60 (AQTGTGKT) is a binding site for ATP. Positions 165 to 168 (DEAD) match the DEAD box motif. One can recognise a Helicase C-terminal domain in the interval 243–390 (KMRLLLTLIE…VSNYDSEALL (148 aa)). The interval 395-438 (TPAKIHRKHPSGTRNLRDRSGTSRPGAQRSGARPPRHDRTRRHS) is disordered. Over residues 428–438 (PPRHDRTRRHS) the composition is skewed to basic residues.

The protein belongs to the DEAD box helicase family. RhlB subfamily. In terms of assembly, component of the RNA degradosome, which is a multiprotein complex involved in RNA processing and mRNA degradation.

The protein resides in the cytoplasm. It catalyses the reaction ATP + H2O = ADP + phosphate + H(+). DEAD-box RNA helicase involved in RNA degradation. Has RNA-dependent ATPase activity and unwinds double-stranded RNA. In Shewanella baltica (strain OS223), this protein is ATP-dependent RNA helicase RhlB.